The sequence spans 259 residues: uncharacterized protein (259 aa).

Belongs to the ParA family.

This is an uncharacterized protein from Methanocaldococcus jannaschii (strain ATCC 43067 / DSM 2661 / JAL-1 / JCM 10045 / NBRC 100440) (Methanococcus jannaschii).